Reading from the N-terminus, the 416-residue chain is Glutamyl-tRNA reductase (416 aa).

Residues 49–52 (TCNR), Ser-105, 110–112 (EPQ), and Gln-116 contribute to the substrate site. Residue Cys-50 is the Nucleophile of the active site. 185–190 (GAGETI) is a binding site for NADP(+).

Belongs to the glutamyl-tRNA reductase family. Homodimer.

It carries out the reaction (S)-4-amino-5-oxopentanoate + tRNA(Glu) + NADP(+) = L-glutamyl-tRNA(Glu) + NADPH + H(+). It functions in the pathway porphyrin-containing compound metabolism; protoporphyrin-IX biosynthesis; 5-aminolevulinate from L-glutamyl-tRNA(Glu): step 1/2. Functionally, catalyzes the NADPH-dependent reduction of glutamyl-tRNA(Glu) to glutamate 1-semialdehyde (GSA). The polypeptide is Glutamyl-tRNA reductase (Shewanella putrefaciens (strain CN-32 / ATCC BAA-453)).